Here is a 486-residue protein sequence, read N- to C-terminus: Lipase 1 (486 aa).

The cysteines at positions 58 and 82 are disulfide-linked. The Acyl-ester intermediate role is filled by serine 193. The active-site Charge relay system is aspartate 303. Residue asparagine 332 is glycosylated (N-linked (GlcNAc...) asparagine). Histidine 392 functions as the Charge relay system in the catalytic mechanism.

The protein belongs to the type-B carboxylesterase/lipase family.

The enzyme catalyses a triacylglycerol + H2O = a diacylglycerol + a fatty acid + H(+). This chain is Lipase 1 (LIP1), found in Yarrowia lipolytica (strain CLIB 122 / E 150) (Yeast).